The primary structure comprises 176 residues: ATP-dependent protease subunit HslV (176 aa).

Residue Thr-6 is part of the active site. Na(+) is bound by residues Ser-161, Cys-164, and Thr-167.

This sequence belongs to the peptidase T1B family. HslV subfamily. In terms of assembly, a double ring-shaped homohexamer of HslV is capped on each side by a ring-shaped HslU homohexamer. The assembly of the HslU/HslV complex is dependent on binding of ATP.

The protein localises to the cytoplasm. It carries out the reaction ATP-dependent cleavage of peptide bonds with broad specificity.. Allosterically activated by HslU binding. Protease subunit of a proteasome-like degradation complex believed to be a general protein degrading machinery. The polypeptide is ATP-dependent protease subunit HslV (Thermosipho africanus (strain TCF52B)).